The chain runs to 105 residues: Protein FAM24A (105 aa).

An N-terminal signal peptide occupies residues 1–32 (MAKMFDLRTKIMIGIGSSLLVAAMVLLSVVFC).

This sequence belongs to the FAM24 family.

It localises to the secreted. This chain is Protein FAM24A (FAM24A), found in Homo sapiens (Human).